The primary structure comprises 510 residues: Light-independent protochlorophyllide reductase subunit B (510 aa).

Asp-36 is a [4Fe-4S] cluster binding site. Asp-297 functions as the Proton donor in the catalytic mechanism. A substrate-binding site is contributed by 432-433 (GM).

This sequence belongs to the ChlB/BchB/BchZ family. Protochlorophyllide reductase is composed of three subunits; ChlL, ChlN and ChlB. Forms a heterotetramer of two ChlB and two ChlN subunits. [4Fe-4S] cluster is required as a cofactor.

Its subcellular location is the plastid. The protein localises to the chloroplast. It catalyses the reaction chlorophyllide a + oxidized 2[4Fe-4S]-[ferredoxin] + 2 ADP + 2 phosphate = protochlorophyllide a + reduced 2[4Fe-4S]-[ferredoxin] + 2 ATP + 2 H2O. It participates in porphyrin-containing compound metabolism; chlorophyll biosynthesis (light-independent). In terms of biological role, component of the dark-operative protochlorophyllide reductase (DPOR) that uses Mg-ATP and reduced ferredoxin to reduce ring D of protochlorophyllide (Pchlide) to form chlorophyllide a (Chlide). This reaction is light-independent. The NB-protein (ChlN-ChlB) is the catalytic component of the complex. The protein is Light-independent protochlorophyllide reductase subunit B of Pinus thunbergii (Japanese black pine).